Consider the following 121-residue polypeptide: Protein yippee-like 5 (121 aa).

One can recognise a Yippee domain in the interval 13–110 (RLFSCANCDT…LERALVRESE (98 aa)). Positions 17, 20, 73, and 76 each coordinate Zn(2+). Serine 118 carries the phosphoserine modification.

It belongs to the yippee family. Identified in the CTLH complex that contains GID4, RANBP9 and/or RANBP10, MKLN1, MAEA, RMND5A (or alternatively its paralog RMND5B), GID8, ARMC8, WDR26 and YPEL5. Within this complex, MAEA, RMND5A (or alternatively its paralog RMND5B), GID8, WDR26, and RANBP9 and/or RANBP10 form the catalytic core, while GID4, MKLN1, ARMC8 and YPEL5 have ancillary roles. Interacts with RANBP9 and RANBP10.

It is found in the nucleus. The protein localises to the cytoplasm. It localises to the cytoskeleton. The protein resides in the microtubule organizing center. Its subcellular location is the centrosome. It is found in the spindle pole. The protein localises to the midbody. Its function is as follows. Component of the CTLH E3 ubiquitin-protein ligase complex that selectively accepts ubiquitin from UBE2H and mediates ubiquitination and subsequent proteasomal degradation of the transcription factor HBP1. Required for normal cell proliferation. The polypeptide is Protein yippee-like 5 (YPEL5) (Bos taurus (Bovine)).